The chain runs to 498 residues: POTE ankyrin domain family member A (498 aa).

ANK repeat units follow at residues 98-127, 131-160, 164-193, 197-226, and 230-259; these read KKRT…QLHV, KKRT…DPNL, YGNT…DIES, GGLT…NLNA, and FGRT…DVFS. The disordered stretch occupies residues 289–410; that stretch reads NQMPNNSSGN…SNEKNKVKSQ (122 aa). Residues 290–302 show a composition bias toward polar residues; the sequence is QMPNNSSGNSNPE. Positions 303–338 are enriched in basic and acidic residues; the sequence is QDLKLTSEEEPQRLKGSENSQHEKVTQEPDINKDCD. Residues 348–359 show a composition bias toward polar residues; that stretch reads HGSNNVGLSENL. A compositionally biased stretch (basic and acidic residues) spans 392 to 406; that stretch reads EEYHRPEKKSNEKNK. A coiled-coil region spans residues 469 to 497; it reads EHLLELKNSHYEQLTVEVEQMENMVHVLQ.

The protein belongs to the POTE family.

The sequence is that of POTE ankyrin domain family member A (POTEA) from Homo sapiens (Human).